Consider the following 306-residue polypeptide: Peroxisomal protein PEX21 (306 aa).

C4 participates in a covalent cross-link: Glycyl cysteine thioester (Cys-Gly) (interchain with G-Cter in ubiquitin). The tract at residues 172–203 (ERQVQDDEKEQQQDKDDDFHLKETSPLDEDQR) is disordered.

The protein belongs to the peroxin-21 family. In terms of assembly, interacts with PEX7. In terms of processing, monoubiquitinated at Cys-4; acts as a signal for PEX21 extraction and is required for proper export from peroxisomes and recycling.

The protein localises to the cytoplasm. It localises to the cytosol. Its subcellular location is the peroxisome. In terms of biological role, mediates peroxisomal import of proteins containing a C-terminal PTS2-type peroxisomal targeting signal via its interaction with PEX7. Interaction with PEX7 only takes place when PEX7 is associated with cargo proteins containing a PTS2 peroxisomal targeting signal. PEX7 along with PTS2-containing cargo proteins are then translocated through the PEX13-PEX14 docking complex together with PEX21. The polypeptide is Peroxisomal protein PEX21 (PEX21) (Kluyveromyces lactis (strain ATCC 8585 / CBS 2359 / DSM 70799 / NBRC 1267 / NRRL Y-1140 / WM37) (Yeast)).